The sequence spans 264 residues: Proliferating cell nuclear antigen 2 (264 aa).

This sequence belongs to the PCNA family. As to quaternary structure, homotrimer. Oligomer. Interacts with ORC1 (via PIP-box motif). Interacts with FEN1.

It is found in the nucleus. Its subcellular location is the chromosome. It localises to the cytoplasm. May be involved in DNA damage response. Appears not to be involved in DNA replication in trophozoites. The protein is Proliferating cell nuclear antigen 2 of Plasmodium falciparum (isolate 3D7).